Here is a 126-residue protein sequence, read N- to C-terminus: Glycine cleavage system H protein (126 aa).

A Lipoyl-binding domain is found at 22–104 (TVTIGVTDFA…YGEGWMIKIK (83 aa)). Residue K63 is modified to N6-lipoyllysine.

It belongs to the GcvH family. As to quaternary structure, the glycine cleavage system is composed of four proteins: P, T, L and H. (R)-lipoate is required as a cofactor.

In terms of biological role, the glycine cleavage system catalyzes the degradation of glycine. The H protein shuttles the methylamine group of glycine from the P protein to the T protein. In Christiangramia forsetii (strain DSM 17595 / CGMCC 1.15422 / KT0803) (Gramella forsetii), this protein is Glycine cleavage system H protein.